A 1347-amino-acid chain; its full sequence is Protocadherin-11 X-linked (1347 aa).

An N-terminal signal peptide occupies residues 1–23; it reads MDLLSGTYIFAVLLACVVFHSGA. The Extracellular portion of the chain corresponds to 24-812; it reads QEKNYTIREE…VSSPTSDYVK (789 aa). 7 consecutive Cadherin domains span residues 26–139, 140–249, 250–355, 362–466, 467–570, 571–673, and 677–795; these read KNYT…APLF, PATV…HPVF, KETE…VPSI, NPVN…APVF, TQSF…SPVF, THNE…KPVF, and PSNY…APVT. Residues asparagine 27, asparagine 48, and asparagine 54 are each glycosylated (N-linked (GlcNAc...) asparagine). Asparagine 344 carries N-linked (GlcNAc...) asparagine glycosylation. A glycan (N-linked (GlcNAc...) asparagine) is linked at asparagine 553. The N-linked (GlcNAc...) asparagine glycan is linked to asparagine 773. The chain crosses the membrane as a helical span at residues 813–833; it reads ILVAAVAGTITVVVVIFITAV. At 834-1347 the chain is on the cytoplasmic side; sequence VRCRQAPHLK…DSPVMEEHPL (514 aa). Disordered stretches follow at residues 1057–1091, 1097–1116, and 1325–1347; these read LPEG…GYPQ, RATP…ESTF, and TFTP…EHPL.

The protein localises to the cell membrane. Potential calcium-dependent cell-adhesion protein. In Pan paniscus (Pygmy chimpanzee), this protein is Protocadherin-11 X-linked (PCDH11X).